The chain runs to 365 residues: Neutral protease 2 homolog mep20 (365 aa).

The N-terminal stretch at 1-19 (MKVTILASAILALINGALA) is a signal peptide. Residues 20-172 (LPANTPTLDV…PQAIKLLDRR (153 aa)) constitute a propeptide that is removed on maturation. Asn-73 carries N-linked (GlcNAc...) asparagine glycosylation. Intrachain disulfides connect Cys-178–Cys-249 and Cys-256–Cys-274. Zn(2+) is bound at residue His-299. Glu-300 is a catalytic residue. Zn(2+) contacts are provided by His-303 and Asp-314. N-linked (GlcNAc...) asparagine glycosylation occurs at Asn-351.

The protein belongs to the peptidase M35 family. Requires Zn(2+) as cofactor.

Its subcellular location is the secreted. It carries out the reaction Preferential cleavage of bonds with hydrophobic residues in P1'. Also 3-Asn-|-Gln-4 and 8-Gly-|-Ser-9 bonds in insulin B chain.. Secreted metalloproteinase that allows assimilation of proteinaceous substrates. Shows high activities on basic nuclear substrates such as histone and protamine. May be involved in virulence. This chain is Neutral protease 2 homolog mep20 (mep20), found in Aspergillus fumigatus (Neosartorya fumigata).